We begin with the raw amino-acid sequence, 261 residues long: NAD-capped RNA hydrolase NudC (261 aa).

Arg74 serves as a coordination point for substrate. Residues Cys103, Cys106, Cys121, and Cys124 each contribute to the Zn(2+) site. Tyr129 is a binding site for substrate. A Nudix hydrolase domain is found at Pro130 to Thr253. A divalent metal cation-binding residues include Ala163, Glu179, and Glu183. Positions Gly164 to Gly185 match the Nudix box motif. Gln197–Ser204 serves as a coordination point for substrate. Glu224 contributes to the a divalent metal cation binding site. Ala246 contacts substrate.

Belongs to the Nudix hydrolase family. NudC subfamily. Homodimer. Mg(2+) is required as a cofactor. It depends on Mn(2+) as a cofactor. The cofactor is Zn(2+).

It catalyses the reaction a 5'-end NAD(+)-phospho-ribonucleoside in mRNA + H2O = a 5'-end phospho-adenosine-phospho-ribonucleoside in mRNA + beta-nicotinamide D-ribonucleotide + 2 H(+). It carries out the reaction NAD(+) + H2O = beta-nicotinamide D-ribonucleotide + AMP + 2 H(+). The catalysed reaction is NADH + H2O = reduced beta-nicotinamide D-ribonucleotide + AMP + 2 H(+). MRNA decapping enzyme that specifically removes the nicotinamide adenine dinucleotide (NAD) cap from a subset of mRNAs by hydrolyzing the diphosphate linkage to produce nicotinamide mononucleotide (NMN) and 5' monophosphate mRNA. The NAD-cap is present at the 5'-end of some mRNAs and stabilizes RNA against 5'-processing. Has preference for mRNAs with a 5'-end purine. Catalyzes the hydrolysis of a broad range of dinucleotide pyrophosphates. The polypeptide is NAD-capped RNA hydrolase NudC (Vibrio vulnificus (strain CMCP6)).